We begin with the raw amino-acid sequence, 26 residues long: GTP-binding protein Rheb (26 aa).

GTP contacts are provided by S1, S2, V13, Y16, and T19. A Mg(2+)-binding site is contributed by S1. The short motif at 16 to 24 is the Effector region element; that stretch reads YDPTIENTF. A Mg(2+)-binding site is contributed by T19.

Belongs to the small GTPase superfamily. Rheb family.

It catalyses the reaction GTP + H2O = GDP + phosphate + H(+). In terms of biological role, binds GTP and exhibits intrinsic GTPase activity. The chain is GTP-binding protein Rheb from Crocodylus siamensis (Siamese crocodile).